The primary structure comprises 398 residues: Succinate--CoA ligase [ADP-forming] subunit beta (398 aa).

An ATP-grasp domain is found at Lys9–Glu253. Residues Lys50, Gly57–Gly59, Val106, and Glu116 each bind ATP. 2 residues coordinate Mg(2+): Asn208 and Asp222. Substrate contacts are provided by residues Asn273 and Gly330–Val332.

It belongs to the succinate/malate CoA ligase beta subunit family. As to quaternary structure, heterotetramer of two alpha and two beta subunits. Mg(2+) serves as cofactor.

The enzyme catalyses succinate + ATP + CoA = succinyl-CoA + ADP + phosphate. The catalysed reaction is GTP + succinate + CoA = succinyl-CoA + GDP + phosphate. It participates in carbohydrate metabolism; tricarboxylic acid cycle; succinate from succinyl-CoA (ligase route): step 1/1. Succinyl-CoA synthetase functions in the citric acid cycle (TCA), coupling the hydrolysis of succinyl-CoA to the synthesis of either ATP or GTP and thus represents the only step of substrate-level phosphorylation in the TCA. The beta subunit provides nucleotide specificity of the enzyme and binds the substrate succinate, while the binding sites for coenzyme A and phosphate are found in the alpha subunit. The polypeptide is Succinate--CoA ligase [ADP-forming] subunit beta (Christiangramia forsetii (strain DSM 17595 / CGMCC 1.15422 / KT0803) (Gramella forsetii)).